Consider the following 142-residue polypeptide: Hemoglobin subunit alpha (142 aa).

S1 bears the N-acetylserine mark. Residues 1–142 form the Globin domain; that stretch reads SLTDKDKATV…VSLALSERYR (142 aa). H59 contacts O2. H88 contacts heme b.

It belongs to the globin family. Hb1 is a heterotetramer of two alpha chains and two beta-1 chains. Hb2 is a heterotetramer of two alpha chains and two beta-2 chains. In terms of tissue distribution, red blood cells.

Its function is as follows. Involved in oxygen transport from gills to the various peripheral tissues. The protein is Hemoglobin subunit alpha (hba) of Pseudaphritis urvillii (Congolli).